The following is a 134-amino-acid chain: Profilin-2 (134 aa).

Thr-114 is modified (phosphothreonine).

This sequence belongs to the profilin family. Occurs in many kinds of cells as a complex with monomeric actin in a 1:1 ratio. In terms of processing, phosphorylated by MAP kinases.

Its subcellular location is the cytoplasm. It is found in the cytoskeleton. Binds to actin and affects the structure of the cytoskeleton. At high concentrations, profilin prevents the polymerization of actin, whereas it enhances it at low concentrations. By binding to PIP2, it inhibits the formation of IP3 and DG. This Nicotiana tabacum (Common tobacco) protein is Profilin-2 (PRO2).